We begin with the raw amino-acid sequence, 290 residues long: Glycine--tRNA ligase alpha subunit (290 aa).

It belongs to the class-II aminoacyl-tRNA synthetase family. As to quaternary structure, tetramer of two alpha and two beta subunits.

The protein localises to the cytoplasm. The enzyme catalyses tRNA(Gly) + glycine + ATP = glycyl-tRNA(Gly) + AMP + diphosphate. The polypeptide is Glycine--tRNA ligase alpha subunit (Brachyspira hyodysenteriae (strain ATCC 49526 / WA1)).